A 119-amino-acid chain; its full sequence is Autophagy-related protein 8B (119 aa).

A lipid anchor (Phosphatidylethanolamine amidated glycine) is attached at Gly117. Residues 118-119 (LL) constitute a propeptide, removed in mature form.

It belongs to the ATG8 family. Interacts with ATG4. In terms of processing, the C-terminal 2 residues are removed by ATG4 to expose Gly-117 at the C-terminus. The C-terminal Gly is then amidated with phosphatidylethanolamine by an activating system similar to that for ubiquitin.

It is found in the cytoplasmic vesicle. The protein resides in the autophagosome membrane. It localises to the vacuole membrane. The protein localises to the cytoplasm. Its subcellular location is the cytoskeleton. Functionally, ubiquitin-like modifier involved in autophagosomes formation. May mediate the delivery of the autophagosomes to the vacuole via the microtubule cytoskeleton. The sequence is that of Autophagy-related protein 8B (ATG8B) from Oryza sativa subsp. indica (Rice).